Here is a 300-residue protein sequence, read N- to C-terminus: N-acetylmuramic acid 6-phosphate etherase (300 aa).

Positions 57 to 220 (VAAALRAGGR…STGAMIRIGK (164 aa)) constitute an SIS domain. The Proton donor role is filled by glutamate 85. Residue glutamate 116 is part of the active site.

Belongs to the GCKR-like family. MurNAc-6-P etherase subfamily. As to quaternary structure, homodimer.

The enzyme catalyses N-acetyl-D-muramate 6-phosphate + H2O = N-acetyl-D-glucosamine 6-phosphate + (R)-lactate. Its pathway is amino-sugar metabolism; 1,6-anhydro-N-acetylmuramate degradation. The protein operates within amino-sugar metabolism; N-acetylmuramate degradation. It participates in cell wall biogenesis; peptidoglycan recycling. Specifically catalyzes the cleavage of the D-lactyl ether substituent of MurNAc 6-phosphate, producing GlcNAc 6-phosphate and D-lactate. Together with AnmK, is also required for the utilization of anhydro-N-acetylmuramic acid (anhMurNAc) either imported from the medium or derived from its own cell wall murein, and thus plays a role in cell wall recycling. This Klebsiella aerogenes (Enterobacter aerogenes) protein is N-acetylmuramic acid 6-phosphate etherase.